A 150-amino-acid polypeptide reads, in one-letter code: Troponin C, isoform 2B (150 aa).

Met-1 is modified (N-acetylmethionine). EF-hand domains are found at residues 7–42 (EQLSALQKAFDSFDTDSKGFITPETVGVILRMMGVK), 43–78 (ISEKNLQEVISETDEDGSGELEFEEFVELAAKFLIE), 83–118 (ALKAELREAFRVYDRGGNGYITTDVLKEILRELDNR), and 119–150 (LTEEDLDSIIEEVDEDGSGTLDFNEFMQMMNG). The Ca(2+) site is built by Asp-56, Asp-58, Ser-60, Glu-62, and Glu-67. Positions 132, 134, 136, 138, and 143 each coordinate Ca(2+).

Belongs to the troponin C family.

Functionally, troponin is the central regulatory protein of striated muscle contraction. Tn consists of three components: Tn-I which is the inhibitor of actomyosin ATPase, Tn-T which contains the binding site for tropomyosin and Tn-C. The binding of calcium to Tn-C abolishes the inhibitory action of Tn on actin filaments. This chain is Troponin C, isoform 2B, found in Homarus americanus (American lobster).